We begin with the raw amino-acid sequence, 324 residues long: 4-hydroxy-3-methylbut-2-enyl diphosphate reductase (324 aa).

Position 13 (Cys-13) interacts with [4Fe-4S] cluster. Residues His-41 and His-75 each coordinate (2E)-4-hydroxy-3-methylbut-2-enyl diphosphate. Residues His-41 and His-75 each coordinate dimethylallyl diphosphate. Isopentenyl diphosphate-binding residues include His-41 and His-75. Cys-97 provides a ligand contact to [4Fe-4S] cluster. His-125 is a binding site for (2E)-4-hydroxy-3-methylbut-2-enyl diphosphate. His-125 serves as a coordination point for dimethylallyl diphosphate. His-125 contributes to the isopentenyl diphosphate binding site. Glu-127 functions as the Proton donor in the catalytic mechanism. Thr-168 is a (2E)-4-hydroxy-3-methylbut-2-enyl diphosphate binding site. Residue Cys-225 participates in [4Fe-4S] cluster binding. (2E)-4-hydroxy-3-methylbut-2-enyl diphosphate contacts are provided by Ser-253, Ser-254, Asn-255, and Ser-302. The dimethylallyl diphosphate site is built by Ser-253, Ser-254, Asn-255, and Ser-302. The isopentenyl diphosphate site is built by Ser-253, Ser-254, Asn-255, and Ser-302.

Belongs to the IspH family. [4Fe-4S] cluster serves as cofactor.

It catalyses the reaction isopentenyl diphosphate + 2 oxidized [2Fe-2S]-[ferredoxin] + H2O = (2E)-4-hydroxy-3-methylbut-2-enyl diphosphate + 2 reduced [2Fe-2S]-[ferredoxin] + 2 H(+). The enzyme catalyses dimethylallyl diphosphate + 2 oxidized [2Fe-2S]-[ferredoxin] + H2O = (2E)-4-hydroxy-3-methylbut-2-enyl diphosphate + 2 reduced [2Fe-2S]-[ferredoxin] + 2 H(+). It participates in isoprenoid biosynthesis; dimethylallyl diphosphate biosynthesis; dimethylallyl diphosphate from (2E)-4-hydroxy-3-methylbutenyl diphosphate: step 1/1. It functions in the pathway isoprenoid biosynthesis; isopentenyl diphosphate biosynthesis via DXP pathway; isopentenyl diphosphate from 1-deoxy-D-xylulose 5-phosphate: step 6/6. In terms of biological role, catalyzes the conversion of 1-hydroxy-2-methyl-2-(E)-butenyl 4-diphosphate (HMBPP) into a mixture of isopentenyl diphosphate (IPP) and dimethylallyl diphosphate (DMAPP). Acts in the terminal step of the DOXP/MEP pathway for isoprenoid precursor biosynthesis. This is 4-hydroxy-3-methylbut-2-enyl diphosphate reductase from Chlorobium limicola (strain DSM 245 / NBRC 103803 / 6330).